The sequence spans 475 residues: Ribulose bisphosphate carboxylase large chain (475 aa).

Residues 1 to 2 (MS) constitute a propeptide that is removed on maturation. N-acetylproline is present on Pro3. Position 14 is an N6,N6,N6-trimethyllysine (Lys14). Substrate-binding residues include Asn123 and Thr173. Lys175 (proton acceptor) is an active-site residue. Lys177 is a substrate binding site. Mg(2+)-binding residues include Lys201, Asp203, and Glu204. Lys201 is modified (N6-carboxylysine). Residue His294 is the Proton acceptor of the active site. The substrate site is built by Arg295, His327, and Ser379.

This sequence belongs to the RuBisCO large chain family. Type I subfamily. As to quaternary structure, heterohexadecamer of 8 large chains and 8 small chains; disulfide-linked. The disulfide link is formed within the large subunit homodimers. Mg(2+) serves as cofactor. The disulfide bond which can form in the large chain dimeric partners within the hexadecamer appears to be associated with oxidative stress and protein turnover.

It localises to the plastid. Its subcellular location is the chloroplast. The catalysed reaction is 2 (2R)-3-phosphoglycerate + 2 H(+) = D-ribulose 1,5-bisphosphate + CO2 + H2O. The enzyme catalyses D-ribulose 1,5-bisphosphate + O2 = 2-phosphoglycolate + (2R)-3-phosphoglycerate + 2 H(+). Functionally, ruBisCO catalyzes two reactions: the carboxylation of D-ribulose 1,5-bisphosphate, the primary event in carbon dioxide fixation, as well as the oxidative fragmentation of the pentose substrate in the photorespiration process. Both reactions occur simultaneously and in competition at the same active site. The chain is Ribulose bisphosphate carboxylase large chain from Cycas taitungensis (Prince sago).